We begin with the raw amino-acid sequence, 149 residues long: Transcriptional repressor NrdR (149 aa).

The segment at 3 to 34 (CPFCGNLETQVVETRVSEDADFIRRRRQCGAC) is a zinc-finger region. Residues 49-139 (PAIVKKDGRR…VYRSFEDIDE (91 aa)) form the ATP-cone domain.

Belongs to the NrdR family. Zn(2+) is required as a cofactor.

Functionally, negatively regulates transcription of bacterial ribonucleotide reductase nrd genes and operons by binding to NrdR-boxes. The protein is Transcriptional repressor NrdR of Polaromonas sp. (strain JS666 / ATCC BAA-500).